Here is a 477-residue protein sequence, read N- to C-terminus: Glycogen synthase (477 aa).

Lys15 contacts ADP-alpha-D-glucose.

The protein belongs to the glycosyltransferase 1 family. Bacterial/plant glycogen synthase subfamily.

The catalysed reaction is [(1-&gt;4)-alpha-D-glucosyl](n) + ADP-alpha-D-glucose = [(1-&gt;4)-alpha-D-glucosyl](n+1) + ADP + H(+). It functions in the pathway glycan biosynthesis; glycogen biosynthesis. In terms of biological role, synthesizes alpha-1,4-glucan chains using ADP-glucose. This Klebsiella pneumoniae (strain 342) protein is Glycogen synthase.